The chain runs to 578 residues: Signal peptide peptidase-like 2B (578 aa).

The N-terminal stretch at 1-19 is a signal peptide; sequence MAAARLAAALLLLAAQVAC. Residues 20-168 lie on the Lumenal side of the membrane; sequence EFGVLRVVSQ…APSEPVMDYN (149 aa). In terms of domain architecture, PA spans 61–145; the sequence is LRDLSTTQLC…LLSHRDLQDI (85 aa). N-linked (GlcNAc...) asparagine glycans are attached at residues N91 and N123. Residues 169-189 traverse the membrane as a helical segment; sequence MVIIFVMAVGTVAIGGYWAGS. Residues 190-216 are Cytoplasmic-facing; that stretch reads HDVKKYMKHKRDDGPEKQEDEAVDVTP. Residues 217–237 traverse the membrane as a helical segment; sequence VMICVFVVMCCFMLVLLYYFY. At 238–239 the chain is on the lumenal side; it reads DR. A helical membrane pass occupies residues 240-260; it reads LVYVIIGIFCLASSTGLYSCL. The Cytoplasmic portion of the chain corresponds to 261-286; it reads APFVRKLPFCTCRVPDNNLPYFHKRP. The helical transmembrane segment at 287–307 threads the bilayer; sequence QARMLLLALFCVTVSVVWGIF. Topologically, residues 308 to 312 are lumenal; sequence RNEDQ. A helical membrane pass occupies residues 313 to 333; it reads WAWVLQDTLGIAFCLYMLKTI. The Cytoplasmic portion of the chain corresponds to 334–341; that stretch reads RLPTFKAC. The chain crosses the membrane as a helical span at residues 342–362; it reads TLLLLVLFIYDIFFVFITPFL. D352 is a catalytic residue. Over 363-405 the chain is Lumenal; it reads TKSGNSIMVEVATGPSNSSTHEKLPMVLKVPRLNTSPLSLCDR. Residues 406–426 form a helical membrane-spanning segment; it reads PFSLLGFGDILVPGLLVAYCH. Residue D414 is part of the active site. Over 427-438 the chain is Cytoplasmic; sequence RFDIQVQSSRIY. A helical membrane pass occupies residues 439–459; it reads FVACTIAYGLGLLVTFVALVL. Residues 460 to 463 lie on the Lumenal side of the membrane; the sequence is MQRG. The helical transmembrane segment at 464–484 threads the bilayer; sequence QPALLYLVPCTLLTSCTVALW. Positions 465 to 467 match the PAL motif; sequence PAL. The Cytoplasmic segment spans residues 485-578; sequence RRELGAFWTG…IPVVKPETSA (94 aa). Residues 502 to 578 are disordered; sequence PQTPWAATQG…IPVVKPETSA (77 aa). A compositionally biased stretch (low complexity) spans 520 to 529; the sequence is SSLSEQPPSE.

Belongs to the peptidase A22B family. In terms of assembly, monomer. Homodimer. Interacts with ITM2B and TNF. Post-translationally, glycosylated.

It is found in the cell membrane. The protein localises to the golgi apparatus membrane. It localises to the lysosome membrane. The protein resides in the endosome membrane. Its subcellular location is the membrane. In terms of biological role, intramembrane-cleaving aspartic protease (I-CLiP) that cleaves type II membrane signal peptides in the hydrophobic plane of the membrane. Functions in ITM2B and TNF processing. Catalyzes the intramembrane cleavage of the anchored fragment of shed TNF-alpha (TNF), which promotes the release of the intracellular domain (ICD) for signaling to the nucleus. May play a role in the regulation of innate and adaptive immunity. The chain is Signal peptide peptidase-like 2B from Mus musculus (Mouse).